The chain runs to 307 residues: PCP degradation transcriptional activation protein (307 aa).

One can recognise an HTH lysR-type domain in the interval 6-63; the sequence is LPLGHLMVFDALYRHGSAGKAAHALSMPQPTLSRWLAQLRTHFDDPLFVRTRSGMEPT. The H-T-H motif DNA-binding region spans 23 to 42; that stretch reads AGKAAHALSMPQPTLSRWLA.

It belongs to the LysR transcriptional regulatory family.

Its function is as follows. Transcriptional activator for the pcpA, pcpB and pcpE genes for pentachlorophenol (PCP) degradation. Essential for PCP degradation. In Sphingobium chlorophenolicum, this protein is PCP degradation transcriptional activation protein (pcpR).